The following is a 101-amino-acid chain: Large ribosomal subunit protein uL23 (101 aa).

It belongs to the universal ribosomal protein uL23 family. In terms of assembly, part of the 50S ribosomal subunit. Contacts protein L29, and trigger factor when it is bound to the ribosome.

Its function is as follows. One of the early assembly proteins it binds 23S rRNA. One of the proteins that surrounds the polypeptide exit tunnel on the outside of the ribosome. Forms the main docking site for trigger factor binding to the ribosome. In Thiobacillus denitrificans (strain ATCC 25259 / T1), this protein is Large ribosomal subunit protein uL23.